A 421-amino-acid polypeptide reads, in one-letter code: Probable UDP-arabinose 4-epimerase 1 (421 aa).

Residues 1–33 are Cytoplasmic-facing; the sequence is MLPTNRNRPQQRPARSWYFISDMDFSDPKRKPR. A helical; Signal-anchor for type II membrane protein transmembrane segment spans residues 34 to 53; it reads YLSKILMVALLTAMCVVMLT. At 54-421 the chain is on the lumenal side; sequence QPPCHRRTPS…GYGPPQAMVL (368 aa). 74-105 is an NAD(+) binding site; that stretch reads HVLVTGGAGYIGSHAALRLLKDSFRVTIVDNL. The active-site Proton acceptor is Tyr222.

The protein belongs to the NAD(P)-dependent epimerase/dehydratase family. NAD(+) serves as cofactor.

The protein resides in the golgi apparatus. Its subcellular location is the golgi stack membrane. It carries out the reaction UDP-beta-L-arabinopyranose = UDP-alpha-D-xylose. It functions in the pathway nucleotide-sugar biosynthesis; UDP-L-arabinose biosynthesis; UDP-L-arabinose from UDP-alpha-D-xylose: step 1/1. The protein operates within cell wall biogenesis; cell wall polysaccharide biosynthesis. The sequence is that of Probable UDP-arabinose 4-epimerase 1 (UEL-1) from Oryza sativa subsp. japonica (Rice).